The chain runs to 1383 residues: DNA-directed RNA polymerase subunit beta'' (1383 aa).

Residues C220, C289, C296, and C299 each contribute to the Zn(2+) site.

It belongs to the RNA polymerase beta' chain family. RpoC2 subfamily. In plastids the minimal PEP RNA polymerase catalytic core is composed of four subunits: alpha, beta, beta', and beta''. When a (nuclear-encoded) sigma factor is associated with the core the holoenzyme is formed, which can initiate transcription. Requires Zn(2+) as cofactor.

It is found in the plastid. Its subcellular location is the chloroplast. It catalyses the reaction RNA(n) + a ribonucleoside 5'-triphosphate = RNA(n+1) + diphosphate. Functionally, DNA-dependent RNA polymerase catalyzes the transcription of DNA into RNA using the four ribonucleoside triphosphates as substrates. The chain is DNA-directed RNA polymerase subunit beta'' from Oenothera elata subsp. hookeri (Hooker's evening primrose).